The chain runs to 422 residues: Serine--tRNA ligase (422 aa).

229-231 (TAE) contacts L-serine. 260–262 (RKE) is a binding site for ATP. Glu-283 provides a ligand contact to L-serine. 347-350 (EISS) contacts ATP. Position 383 (Ser-383) interacts with L-serine.

Belongs to the class-II aminoacyl-tRNA synthetase family. Type-1 seryl-tRNA synthetase subfamily. In terms of assembly, homodimer. The tRNA molecule binds across the dimer.

It is found in the cytoplasm. It carries out the reaction tRNA(Ser) + L-serine + ATP = L-seryl-tRNA(Ser) + AMP + diphosphate + H(+). It catalyses the reaction tRNA(Sec) + L-serine + ATP = L-seryl-tRNA(Sec) + AMP + diphosphate + H(+). It functions in the pathway aminoacyl-tRNA biosynthesis; selenocysteinyl-tRNA(Sec) biosynthesis; L-seryl-tRNA(Sec) from L-serine and tRNA(Sec): step 1/1. Catalyzes the attachment of serine to tRNA(Ser). Is also able to aminoacylate tRNA(Sec) with serine, to form the misacylated tRNA L-seryl-tRNA(Sec), which will be further converted into selenocysteinyl-tRNA(Sec). The sequence is that of Serine--tRNA ligase from Natranaerobius thermophilus (strain ATCC BAA-1301 / DSM 18059 / JW/NM-WN-LF).